The primary structure comprises 197 residues: Holliday junction branch migration complex subunit RuvA (197 aa).

Residues 1–63 form a domain I region; it reads MYAYLKGIIT…EDAHLLYGFR (63 aa). Positions 64-142 are domain II; that stretch reads SEDEKKLFLS…VAGDDLPAKI (79 aa). Positions 143–147 are flexible linker; it reads AVQAS. Residues 148–197 form a domain III region; the sequence is AENQELEEAMEAMLALGYKATELKKIKKFFEGTTDTAENYIKSALKMLVK.

It belongs to the RuvA family. As to quaternary structure, homotetramer. Forms an RuvA(8)-RuvB(12)-Holliday junction (HJ) complex. HJ DNA is sandwiched between 2 RuvA tetramers; dsDNA enters through RuvA and exits via RuvB. An RuvB hexamer assembles on each DNA strand where it exits the tetramer. Each RuvB hexamer is contacted by two RuvA subunits (via domain III) on 2 adjacent RuvB subunits; this complex drives branch migration. In the full resolvosome a probable DNA-RuvA(4)-RuvB(12)-RuvC(2) complex forms which resolves the HJ.

The protein localises to the cytoplasm. Its function is as follows. The RuvA-RuvB-RuvC complex processes Holliday junction (HJ) DNA during genetic recombination and DNA repair, while the RuvA-RuvB complex plays an important role in the rescue of blocked DNA replication forks via replication fork reversal (RFR). RuvA specifically binds to HJ cruciform DNA, conferring on it an open structure. The RuvB hexamer acts as an ATP-dependent pump, pulling dsDNA into and through the RuvAB complex. HJ branch migration allows RuvC to scan DNA until it finds its consensus sequence, where it cleaves and resolves the cruciform DNA. In Streptococcus pneumoniae (strain Taiwan19F-14), this protein is Holliday junction branch migration complex subunit RuvA.